A 121-amino-acid chain; its full sequence is Large ribosomal subunit protein bL19 (121 aa).

It belongs to the bacterial ribosomal protein bL19 family.

Functionally, this protein is located at the 30S-50S ribosomal subunit interface and may play a role in the structure and function of the aminoacyl-tRNA binding site. This Mesomycoplasma hyopneumoniae (strain 232) (Mycoplasma hyopneumoniae) protein is Large ribosomal subunit protein bL19.